Here is a 102-residue protein sequence, read N- to C-terminus: Small ribosomal subunit protein uS10 (102 aa).

Belongs to the universal ribosomal protein uS10 family. Part of the 30S ribosomal subunit.

In terms of biological role, involved in the binding of tRNA to the ribosomes. The polypeptide is Small ribosomal subunit protein uS10 (Parafrankia sp. (strain EAN1pec)).